A 1286-amino-acid polypeptide reads, in one-letter code: DNA-directed RNA polymerase 147 kDa polypeptide (1286 aa).

This sequence belongs to the poxviridae DNA-directed RNA polymerase 147 kDa subunit family. As to quaternary structure, the DNA-dependent RNA polymerase used for intermediate and late genes expression consists of eight subunits Rpo30/OPG66, Rpo7/OPG90, Rpo22/OPG103, Rpo147/OPG105, Rpo18/OPG119, Rpo19/OPG131, Rpo132/OPG151 and Rpo35/OPG156. The same holoenzyme, with the addition of the transcription-specificity factor OPG109, is used for early gene expression.

The protein localises to the virion. It catalyses the reaction RNA(n) + a ribonucleoside 5'-triphosphate = RNA(n+1) + diphosphate. Part of the DNA-dependent RNA polymerase which catalyzes the transcription of viral DNA into RNA using the four ribonucleoside triphosphates as substrates. Responsible for the transcription of early, intermediate and late genes. DNA-dependent RNA polymerase associates with the early transcription factor (ETF), itself composed of OPG118 and OPG133, thereby allowing the early genes transcription. Late transcription, and probably also intermediate transcription, require newly synthesized RNA polymerase. The chain is DNA-directed RNA polymerase 147 kDa polypeptide (OPG105) from Vaccinia virus (strain Ankara) (VACV).